A 275-amino-acid chain; its full sequence is Hydroxyethylthiazole kinase (275 aa).

Met57 lines the substrate pocket. Residues Arg132 and Ser178 each coordinate ATP. A substrate-binding site is contributed by Gly205.

It belongs to the Thz kinase family. Mg(2+) is required as a cofactor.

It catalyses the reaction 5-(2-hydroxyethyl)-4-methylthiazole + ATP = 4-methyl-5-(2-phosphooxyethyl)-thiazole + ADP + H(+). It participates in cofactor biosynthesis; thiamine diphosphate biosynthesis; 4-methyl-5-(2-phosphoethyl)-thiazole from 5-(2-hydroxyethyl)-4-methylthiazole: step 1/1. Its function is as follows. Catalyzes the phosphorylation of the hydroxyl group of 4-methyl-5-beta-hydroxyethylthiazole (THZ). In Clavibacter sepedonicus (Clavibacter michiganensis subsp. sepedonicus), this protein is Hydroxyethylthiazole kinase.